A 215-amino-acid chain; its full sequence is UPF0502 protein YceH (215 aa).

An N6-acetyllysine modification is found at K80.

This sequence belongs to the UPF0502 family.

In Escherichia coli (strain K12 / MC4100 / BW2952), this protein is UPF0502 protein YceH.